Here is a 166-residue protein sequence, read N- to C-terminus: Phosphopantetheine adenylyltransferase (166 aa).

A substrate-binding site is contributed by S11. Residues 11–12 (SF) and H19 each bind ATP. Substrate-binding residues include K43, A76, and R90. Residues 91-93 (GLR), E101, and 126-132 (LQPISSS) each bind ATP.

This sequence belongs to the bacterial CoaD family. As to quaternary structure, homohexamer. Requires Mg(2+) as cofactor.

It localises to the cytoplasm. The catalysed reaction is (R)-4'-phosphopantetheine + ATP + H(+) = 3'-dephospho-CoA + diphosphate. It functions in the pathway cofactor biosynthesis; coenzyme A biosynthesis; CoA from (R)-pantothenate: step 4/5. Its function is as follows. Reversibly transfers an adenylyl group from ATP to 4'-phosphopantetheine, yielding dephospho-CoA (dPCoA) and pyrophosphate. This Streptococcus equi subsp. zooepidemicus (strain MGCS10565) protein is Phosphopantetheine adenylyltransferase.